We begin with the raw amino-acid sequence, 753 residues long: Polyribonucleotide nucleotidyltransferase (753 aa).

2 residues coordinate Mg(2+): Asp-488 and Asp-494. The region spanning 555–614 (PKLYTMKINPEKIRDVIGKGGSTIRALTEETGTQIDIGEDGTITIASSDAAKADEAKRRI) is the KH domain. In terms of domain architecture, S1 motif spans 624–692 (GKIYEGPVTK…EKGRVKLSLK (69 aa)). The segment at 692–753 (KALTERPAGM…EGEQQQQQQQ (62 aa)) is disordered. Over residues 699–739 (AGMERSDRPAPAEREFRQPREPRQQREFREPREPREPRDGG) the composition is skewed to basic and acidic residues.

The protein belongs to the polyribonucleotide nucleotidyltransferase family. Mg(2+) serves as cofactor.

Its subcellular location is the cytoplasm. It catalyses the reaction RNA(n+1) + phosphate = RNA(n) + a ribonucleoside 5'-diphosphate. In terms of biological role, involved in mRNA degradation. Catalyzes the phosphorolysis of single-stranded polyribonucleotides processively in the 3'- to 5'-direction. In Delftia acidovorans (strain DSM 14801 / SPH-1), this protein is Polyribonucleotide nucleotidyltransferase.